The primary structure comprises 292 residues: MGEKSNCRVPEDLFTGLKVTDPQEAECLHPPVSSGKEQHSQSELLKDVDAQPQEDQGEEECFHDASASFETEEPGADKLENKPEDDMNPSELDEEYLMELEKNMPDEEKKRRREESSRLKEEGNEQFKKGDYIEAESSYTRALQTCPSCFQKDRSVLFSNRAAARMKQEKKEMAISDCSKAIQLNPSYIRAILRRAELYEKTDKLDEALEDYKSILEKDPSVHQAREACMRLPKQIEERNERLKEEMLGKLKDLGNLVLRPFGLSTENFQIKQDSSTGSYSINFVQNPNNNR.

Positions 20-125 (TDPQEAECLH…SSRLKEEGNE (106 aa)) are disordered. Basic and acidic residues-rich tracts occupy residues 36 to 49 (KEQH…KDVD) and 75 to 85 (GADKLENKPED). Residues 86 to 98 (DMNPSELDEEYLM) show a composition bias toward acidic residues. Ser90 is subject to Phosphoserine. Positions 99–125 (ELEKNMPDEEKKRRREESSRLKEEGNE) are enriched in basic and acidic residues. TPR repeat units lie at residues 116–149 (SSRL…CPSC), 155–188 (SVLF…NPSY), and 189–222 (IRAI…DPSV).

Interacts with the GAP domain of NF1. Interacts (via TPR repeats) with HSP90AA1 and HSPA8.

This is Tetratricopeptide repeat protein 1 (TTC1) from Bos taurus (Bovine).